A 99-amino-acid chain; its full sequence is Goannatyrotoxin-Vere1 (99 aa).

An N-terminal signal peptide occupies residues 1-28; the sequence is MIASMKPWPLVMVAALCILFCLGTLVDA. Tyrosine amide is present on Tyr-64. Positions 68–99 are cleaved as a propeptide — C-terminal extension; sequence SSPETLMSELIFGENSNSDHSSRSRFDDSYMW.

Belongs to the NPY family. Expressed by the mandibular venom gland.

Its subcellular location is the secreted. In terms of biological role, shows a potent unique triphasic action, rapid biphasic hypertension followed by prolonged hypotension. This Varanus eremius (Rusty desert monitor) protein is Goannatyrotoxin-Vere1.